The sequence spans 443 residues: Threonine/serine transporter TdcC (443 aa).

Transmembrane regions (helical) follow at residues 22–42, 44–64, 97–117, 140–160, 163–183, 207–227, 259–279, 319–339, 366–386, 389–409, and 423–443; these read TTWT…FFPI, AGFG…PIAF, GVVI…IYGV, VVAL…KDLM, VMSY…LSLI, ILVT…FSPI, ASML…FTLS, ASII…LGTL, LSMV…PNIL, IEAM…MYAI, and DNLF…YKLF.

This sequence belongs to the amino acid/polyamine transporter 2 family. SdaC/TdcC subfamily.

The protein localises to the cell inner membrane. It catalyses the reaction L-threonine(in) + H(+)(in) = L-threonine(out) + H(+)(out). It carries out the reaction L-serine(in) + H(+)(in) = L-serine(out) + H(+)(out). Functionally, involved in the import of threonine and serine into the cell, with the concomitant import of a proton (symport system). The sequence is that of Threonine/serine transporter TdcC from Klebsiella pneumoniae (strain 342).